We begin with the raw amino-acid sequence, 259 residues long: 4-hydroxy-tetrahydrodipicolinate reductase (259 aa).

Residues 8–13 (GFAGAM), 94–96 (GTT), and 120–123 (APNF) each bind NAD(+). H150 functions as the Proton donor/acceptor in the catalytic mechanism. H151 serves as a coordination point for (S)-2,3,4,5-tetrahydrodipicolinate. Catalysis depends on K154, which acts as the Proton donor. 160-161 (GT) contacts (S)-2,3,4,5-tetrahydrodipicolinate.

This sequence belongs to the DapB family.

The protein localises to the cytoplasm. The catalysed reaction is (S)-2,3,4,5-tetrahydrodipicolinate + NAD(+) + H2O = (2S,4S)-4-hydroxy-2,3,4,5-tetrahydrodipicolinate + NADH + H(+). It catalyses the reaction (S)-2,3,4,5-tetrahydrodipicolinate + NADP(+) + H2O = (2S,4S)-4-hydroxy-2,3,4,5-tetrahydrodipicolinate + NADPH + H(+). It participates in amino-acid biosynthesis; L-lysine biosynthesis via DAP pathway; (S)-tetrahydrodipicolinate from L-aspartate: step 4/4. Catalyzes the conversion of 4-hydroxy-tetrahydrodipicolinate (HTPA) to tetrahydrodipicolinate. The sequence is that of 4-hydroxy-tetrahydrodipicolinate reductase from Limosilactobacillus fermentum (strain NBRC 3956 / LMG 18251) (Lactobacillus fermentum).